The primary structure comprises 100 residues: Urease subunit gamma (100 aa).

It belongs to the urease gamma subunit family. As to quaternary structure, heterotrimer of UreA (gamma), UreB (beta) and UreC (alpha) subunits. Three heterotrimers associate to form the active enzyme.

It localises to the cytoplasm. It carries out the reaction urea + 2 H2O + H(+) = hydrogencarbonate + 2 NH4(+). The protein operates within nitrogen metabolism; urea degradation; CO(2) and NH(3) from urea (urease route): step 1/1. In Leptothrix cholodnii (strain ATCC 51168 / LMG 8142 / SP-6) (Leptothrix discophora (strain SP-6)), this protein is Urease subunit gamma.